The primary structure comprises 186 residues: UPF0303 protein ZMO1353 (186 aa).

The protein belongs to the UPF0303 family.

The chain is UPF0303 protein ZMO1353 from Zymomonas mobilis subsp. mobilis (strain ATCC 31821 / ZM4 / CP4).